The following is a 178-amino-acid chain: Gamma-crystallin S (178 aa).

Ser2 carries the post-translational modification N-acetylserine. The N-terminal arm stretch occupies residues 2–5; sequence SKTG. Beta/gamma crystallin 'Greek key' domains follow at residues 6-44 and 45-87; these read GKIS…RVEG and GTWA…RAVH. The tract at residues 88 to 93 is connecting peptide; sequence LSSGGQ. Beta/gamma crystallin 'Greek key' domains are found at residues 94-134 and 135-177; these read AKIQ…KVVE and GTWI…RRIV.

It belongs to the beta/gamma-crystallin family. In terms of assembly, monomer.

In terms of biological role, crystallins are the dominant structural components of the vertebrate eye lens. This Mus musculus (Mouse) protein is Gamma-crystallin S (Crygs).